The following is a 334-amino-acid chain: Ferredoxin--NADP reductase (334 aa).

The FAD site is built by aspartate 33, glutamine 41, tyrosine 46, alanine 86, phenylalanine 120, aspartate 286, and threonine 327.

The protein belongs to the ferredoxin--NADP reductase type 2 family. In terms of assembly, homodimer. Requires FAD as cofactor.

It catalyses the reaction 2 reduced [2Fe-2S]-[ferredoxin] + NADP(+) + H(+) = 2 oxidized [2Fe-2S]-[ferredoxin] + NADPH. In Rickettsia prowazekii (strain Madrid E), this protein is Ferredoxin--NADP reductase.